We begin with the raw amino-acid sequence, 148 residues long: 3-dehydroquinate dehydratase (148 aa).

The active-site Proton acceptor is tyrosine 24. Substrate contacts are provided by asparagine 80, histidine 86, and aspartate 93. Histidine 106 acts as the Proton donor in catalysis. Substrate is bound by residues isoleucine 107–serine 108 and arginine 117.

The protein belongs to the type-II 3-dehydroquinase family. In terms of assembly, homododecamer.

The catalysed reaction is 3-dehydroquinate = 3-dehydroshikimate + H2O. It functions in the pathway metabolic intermediate biosynthesis; chorismate biosynthesis; chorismate from D-erythrose 4-phosphate and phosphoenolpyruvate: step 3/7. Its function is as follows. Catalyzes a trans-dehydration via an enolate intermediate. The chain is 3-dehydroquinate dehydratase from Acidovorax ebreus (strain TPSY) (Diaphorobacter sp. (strain TPSY)).